Consider the following 1704-residue polypeptide: ABC transporter ced-7 (1704 aa).

The chain crosses the membrane as a helical span at residues 23 to 43 (VWTLFELIIPCLLLGPLVYLV). N-linked (GlcNAc...) asparagine glycans are attached at residues Asn126 and Asn145. A run of 3 helical transmembrane segments spans residues 256 to 276 (AFIDFFPFIWAFVTFINVIHI), 306 to 326 (VVMAFLKFFVIFLCSIIPLTF), and 334 to 354 (AALIVTVLMYGLGAVIFGAFV). Asn359 is a glycosylation site (N-linked (GlcNAc...) asparagine). The next 2 membrane-spanning stretches (helical) occupy residues 362-382 (NSAIKAILVAWGAMIGISYKL) and 389-409 (ISSCFLYGLNINGAFALAVEA). N-linked (GlcNAc...) asparagine glycans are attached at residues Asn421 and Asn427. Residues 436–456 (GWALVMMIVDILWMSIGALVV) traverse the membrane as a helical segment. An N-linked (GlcNAc...) asparagine glycan is attached at Asn481. The segment at 511–536 (NPMASTSLNPPNADSDSLLEGSTEAD) is disordered. The span at 512 to 525 (PMASTSLNPPNADS) shows a compositional bias: polar residues. The ABC transporter 1 domain occupies 546 to 777 (IIVRNLVKIW…FGTGYLLTVV (232 aa)). Residue 580-587 (GHNGAGKS) coordinates ATP. Asn678, Asn727, and Asn899 each carry an N-linked (GlcNAc...) asparagine glycan. Composition is skewed to polar residues over residues 888-902 (RQNSRISHNSRNASE) and 911-921 (DTQSSTKSADS). A disordered region spans residues 888–933 (RQNSRISHNSRNASEPSLKPAGYDTQSSTKSADSYQKLMDSQARGP). The helical transmembrane segment at 963-983 (LFTQVLIPIILLGLVGSLTTL) threads the bilayer. Residues Asn986, Asn1012, and Asn1045 are each glycosylated (N-linked (GlcNAc...) asparagine). 7 helical membrane-spanning segments follow: residues 1126-1146 (LAPMLILIFAMVTSTFVMFLI), 1153-1173 (FAHQQFLTGISPITFYSASLI), 1176-1196 (GILYSLICLIFLFMFLAFHWM), 1201-1221 (AIVILFWFLYFFSSVPFIYAV), 1234-1254 (LLIIWQVVISGAALLAVFLIF), 1266-1286 (ILVNIFMFLLPSYAFGSAIIT), and 1311-1331 (LMGTFGVCSFALFVLLQFKFV). The region spanning 1379–1603 (LVIKDLTKTF…YGNNYTMTLS (225 aa)) is the ABC transporter 2 domain. 1411–1418 (GVNGAGKT) is a binding site for ATP. N-linked (GlcNAc...) asparagine glycans are attached at residues Asn1597 and Asn1632.

It belongs to the ABC transporter superfamily. ABCA family. In terms of tissue distribution, ubiquitous in embryos. Expressed in larval germline precursors. Expression in larvae and adults is seen in amphid sheath cells, pharyngeal-intestinal valve and phasmid sheath cells. Low levels of expression are also seen in gonadal sheath cells.

Its subcellular location is the membrane. Its function is as follows. Functions in the engulfment of cell corpses during embryonic programmed cell death to translocate molecules that mediate homotypic adhesion between cell surfaces of the dying and engulfing cells. In Caenorhabditis elegans, this protein is ABC transporter ced-7 (ced-7).